We begin with the raw amino-acid sequence, 384 residues long: MAP kinase-activated protein kinase 3 (384 aa).

Met1 carries the post-translational modification N-acetylmethionine. A disordered region spans residues 1 to 33 (MDGETAGEKGSLVPQPGALGAPALGGAPAPGVR). Positions 14 to 31 (PQPGALGAPALGGAPAPG) are enriched in low complexity. In terms of domain architecture, Protein kinase spans 46-306 (QLSKQVLGLG…IMQFMNHPWI (261 aa)). ATP contacts are provided by residues 52 to 60 (LGLGVNGKV) and Lys75. Asp168 functions as the Proton acceptor in the catalytic mechanism. Residue Thr203 is modified to Phosphothreonine; by MAPK14. Position 253 is a phosphoserine; by MAPK14 (Ser253). Phosphoserine; by autocatalysis is present on Ser309. Positions 309-345 (SMEVPQTPLHTARVLEEDKDHWDDVKEEMTSALATMR) are autoinhibitory helix. Thr315 carries the post-translational modification Phosphothreonine; by MAPK14. The Nuclear export signal (NES) signature appears at 337-346 (MTSALATMRV). A p38 MAPK-binding site region spans residues 347–371 (DYDQVKIKDLKTSNNRLLNKRRKKQ). 2 consecutive short sequence motifs (bipartite nuclear localization signal) follow at residues 352–355 (KIKD) and 366–370 (KRRKK). The segment at 359–384 (SNNRLLNKRRKKQGGSSSASPGCNNQ) is disordered. Residues 372-384 (GGSSSASPGCNNQ) show a composition bias toward polar residues.

It belongs to the protein kinase superfamily. CAMK Ser/Thr protein kinase family. As to quaternary structure, heterodimer with p38-alpha/MAPK14. The heterodimer with p38-alpha/MAPK14 forms a stable complex: molecules are positioned 'face to face' so that the ATP-binding sites of both kinases are at the heterodimer interface. Interacts with TCF3 and with polycomb proteins, such as PCH2 and BMI1/PCGF4. Phosphorylated and activated by MAPK1/ERK2 and MAPK3/ERK1. Phosphorylated and activated by MAP kinase p38-alpha/MAPK14 at Thr-203, Ser-253 and Thr-315.

The protein localises to the nucleus. Its subcellular location is the cytoplasm. It catalyses the reaction L-seryl-[protein] + ATP = O-phospho-L-seryl-[protein] + ADP + H(+). The catalysed reaction is L-threonyl-[protein] + ATP = O-phospho-L-threonyl-[protein] + ADP + H(+). Activated following phosphorylation by p38-alpha/MAPK14 following various stresses. Inhibited by ligand 5B (2'-[2-(1,3-benzodioxol-5-yl)pyrimidin-4-yl]-5',6'-dihydrospiro[piperidine-4,7'-pyrrolo[3,2-c]pyridin]- 4'(1'h)-one) and ligand P4O (2-[2-(2-fluorophenyl)pyridin-4-yl]-1,5,6,7-tetrahydro- 4h-pyrrolo[3,2-c]pyridin-4-one), 2 ATP-competitive inhibitors. Its function is as follows. Stress-activated serine/threonine-protein kinase involved in cytokines production, endocytosis, cell migration, chromatin remodeling and transcriptional regulation. Following stress, it is phosphorylated and activated by MAP kinase p38-alpha/MAPK14, leading to phosphorylation of substrates. Phosphorylates serine in the peptide sequence, Hyd-X-R-X(2)-S, where Hyd is a large hydrophobic residue. MAPKAPK2 and MAPKAPK3, share the same function and substrate specificity, but MAPKAPK3 kinase activity and level in protein expression are lower compared to MAPKAPK2. Phosphorylates HSP27/HSPB1, KRT18, KRT20, RCSD1, RPS6KA3, TAB3 and TTP/ZFP36. Mediates phosphorylation of HSP27/HSPB1 in response to stress, leading to dissociate HSP27/HSPB1 from large small heat-shock protein (sHsps) oligomers and impair their chaperone activities and ability to protect against oxidative stress effectively. Involved in inflammatory response by regulating tumor necrosis factor (TNF) and IL6 production post-transcriptionally: acts by phosphorylating AU-rich elements (AREs)-binding proteins, such as TTP/ZFP36, leading to regulate the stability and translation of TNF and IL6 mRNAs. Phosphorylation of TTP/ZFP36, a major post-transcriptional regulator of TNF, promotes its binding to 14-3-3 proteins and reduces its ARE mRNA affinity leading to inhibition of dependent degradation of ARE-containing transcript. Involved in toll-like receptor signaling pathway (TLR) in dendritic cells: required for acute TLR-induced macropinocytosis by phosphorylating and activating RPS6KA3. Also acts as a modulator of Polycomb-mediated repression. The sequence is that of MAP kinase-activated protein kinase 3 (Mapkapk3) from Rattus norvegicus (Rat).